Reading from the N-terminus, the 218-residue chain is Recombination protein RecR (218 aa).

The C4-type zinc finger occupies 56 to 71 (CRICCNISREEVCRIC). In terms of domain architecture, Toprim spans 79-195 (GTICVVEEPK…VVSRLASGMP (117 aa)).

It belongs to the RecR family.

May play a role in DNA repair. It seems to be involved in an RecBC-independent recombinational process of DNA repair. It may act with RecF and RecO. This Corynebacterium glutamicum (strain R) protein is Recombination protein RecR.